The following is a 172-amino-acid chain: MVNLILVGPMGAGKSTIGRLLAKELHLAFKDSDKEIEQRCGANIPWIFDVEGEVGFREREQAMLTELCAADGMVIATGGGAVMRDGNRQVLRAGGRVVYLHASVEHQIARTARDRNRPLLQKPNPGQILRDLMALRDPLYREIADVVVETDERPPRLVVQEILERLRKLPPR.

11 to 16 (GAGKST) serves as a coordination point for ATP. Serine 15 is a binding site for Mg(2+). Substrate-binding residues include aspartate 33, arginine 57, and glycine 79. Arginine 117 provides a ligand contact to ATP. A substrate-binding site is contributed by arginine 136. Position 153 (arginine 153) interacts with ATP.

It belongs to the shikimate kinase family. In terms of assembly, monomer. Mg(2+) serves as cofactor.

It is found in the cytoplasm. The enzyme catalyses shikimate + ATP = 3-phosphoshikimate + ADP + H(+). It functions in the pathway metabolic intermediate biosynthesis; chorismate biosynthesis; chorismate from D-erythrose 4-phosphate and phosphoenolpyruvate: step 5/7. In terms of biological role, catalyzes the specific phosphorylation of the 3-hydroxyl group of shikimic acid using ATP as a cosubstrate. The chain is Shikimate kinase from Pseudomonas aeruginosa (strain LESB58).